Reading from the N-terminus, the 179-residue chain is ATP-dependent protease subunit HslV (179 aa).

Thr-8 is a catalytic residue. Positions 163, 166, and 169 each coordinate Na(+).

This sequence belongs to the peptidase T1B family. HslV subfamily. As to quaternary structure, a double ring-shaped homohexamer of HslV is capped on each side by a ring-shaped HslU homohexamer. The assembly of the HslU/HslV complex is dependent on binding of ATP.

Its subcellular location is the cytoplasm. It carries out the reaction ATP-dependent cleavage of peptide bonds with broad specificity.. Allosterically activated by HslU binding. Functionally, protease subunit of a proteasome-like degradation complex believed to be a general protein degrading machinery. The protein is ATP-dependent protease subunit HslV of Solibacter usitatus (strain Ellin6076).